The following is a 102-amino-acid chain: UPF0213 protein in potE 3'region (102 aa).

One can recognise a GIY-YIG domain in the interval 6–81 (SPWHLYMLRL…KQLSKTQKER (76 aa)).

It belongs to the UPF0213 family.

This chain is UPF0213 protein in potE 3'region, found in Serratia liquefaciens.